Reading from the N-terminus, the 158-residue chain is NADH-quinone oxidoreductase subunit B 1 (158 aa).

[4Fe-4S] cluster contacts are provided by Cys-37, Cys-38, Cys-102, and Cys-132.

It belongs to the complex I 20 kDa subunit family. In terms of assembly, NDH-1 is composed of 14 different subunits. Subunits NuoB, C, D, E, F, and G constitute the peripheral sector of the complex. The cofactor is [4Fe-4S] cluster.

Its subcellular location is the cell inner membrane. The enzyme catalyses a quinone + NADH + 5 H(+)(in) = a quinol + NAD(+) + 4 H(+)(out). In terms of biological role, NDH-1 shuttles electrons from NADH, via FMN and iron-sulfur (Fe-S) centers, to quinones in the respiratory chain. Couples the redox reaction to proton translocation (for every two electrons transferred, four hydrogen ions are translocated across the cytoplasmic membrane), and thus conserves the redox energy in a proton gradient. The protein is NADH-quinone oxidoreductase subunit B 1 of Chromobacterium violaceum (strain ATCC 12472 / DSM 30191 / JCM 1249 / CCUG 213 / NBRC 12614 / NCIMB 9131 / NCTC 9757 / MK).